The sequence spans 155 residues: Ribosome maturation factor RimP (155 aa).

It belongs to the RimP family.

The protein localises to the cytoplasm. In terms of biological role, required for maturation of 30S ribosomal subunits. The polypeptide is Ribosome maturation factor RimP (Staphylococcus haemolyticus (strain JCSC1435)).